The primary structure comprises 144 residues: Transcriptional regulator SlyA (144 aa).

Positions 2–135 (ESPLGSDLAR…LNKIISKLEK (134 aa)) constitute an HTH marR-type domain. Positions 49-72 (QIQLAKAIGIEQPSLVRTLDQLEE) form a DNA-binding region, H-T-H motif.

It belongs to the SlyA family. In terms of assembly, homodimer.

Functionally, transcription regulator that can specifically activate or repress expression of target genes. This is Transcriptional regulator SlyA from Blochmanniella pennsylvanica (strain BPEN).